Here is a 270-residue protein sequence, read N- to C-terminus: Cytochrome c oxidase subunit 3 (270 aa).

The next 7 membrane-spanning stretches (helical) occupy residues 21-41 (PWPF…VLYF), 46-66 (GSLV…FVWW), 90-110 (GIML…WAFF), 131-151 (FFSP…SGCA), 167-187 (AIFS…FQIY), 205-225 (FFMI…FLFV), and 248-268 (WYWH…YWWG).

The protein belongs to the cytochrome c oxidase subunit 3 family. In terms of assembly, component of the cytochrome c oxidase (complex IV, CIV), a multisubunit enzyme composed of a catalytic core of 3 subunits and several supernumerary subunits. The complex exists as a monomer or a dimer and forms supercomplexes (SCs) in the inner mitochondrial membrane with ubiquinol-cytochrome c oxidoreductase (cytochrome b-c1 complex, complex III, CIII).

Its subcellular location is the mitochondrion inner membrane. It carries out the reaction 4 Fe(II)-[cytochrome c] + O2 + 8 H(+)(in) = 4 Fe(III)-[cytochrome c] + 2 H2O + 4 H(+)(out). In terms of biological role, component of the cytochrome c oxidase, the last enzyme in the mitochondrial electron transport chain which drives oxidative phosphorylation. The respiratory chain contains 3 multisubunit complexes succinate dehydrogenase (complex II, CII), ubiquinol-cytochrome c oxidoreductase (cytochrome b-c1 complex, complex III, CIII) and cytochrome c oxidase (complex IV, CIV), that cooperate to transfer electrons derived from NADH and succinate to molecular oxygen, creating an electrochemical gradient over the inner membrane that drives transmembrane transport and the ATP synthase. Cytochrome c oxidase is the component of the respiratory chain that catalyzes the reduction of oxygen to water. Electrons originating from reduced cytochrome c in the intermembrane space (IMS) are transferred via the dinuclear copper A center (CU(A)) of subunit 2 and heme A of subunit 1 to the active site in subunit 1, a binuclear center (BNC) formed by heme A3 and copper B (CU(B)). The BNC reduces molecular oxygen to 2 water molecules using 4 electrons from cytochrome c in the IMS and 4 protons from the mitochondrial matrix. The sequence is that of Cytochrome c oxidase subunit 3 (COX3) from Cyanidium caldarium (Red alga).